Here is a 250-residue protein sequence, read N- to C-terminus: Hydroxyethylthiazole kinase (250 aa).

Position 39 (Met-39) interacts with substrate. ATP contacts are provided by Arg-114 and Thr-159. Gly-186 provides a ligand contact to substrate.

Belongs to the Thz kinase family. Mg(2+) serves as cofactor.

It catalyses the reaction 5-(2-hydroxyethyl)-4-methylthiazole + ATP = 4-methyl-5-(2-phosphooxyethyl)-thiazole + ADP + H(+). It functions in the pathway cofactor biosynthesis; thiamine diphosphate biosynthesis; 4-methyl-5-(2-phosphoethyl)-thiazole from 5-(2-hydroxyethyl)-4-methylthiazole: step 1/1. Functionally, catalyzes the phosphorylation of the hydroxyl group of 4-methyl-5-beta-hydroxyethylthiazole (THZ). In Lactococcus lactis subsp. cremoris (strain SK11), this protein is Hydroxyethylthiazole kinase.